The primary structure comprises 241 residues: 2-C-methyl-D-erythritol 4-phosphate cytidylyltransferase (241 aa).

Belongs to the IspD/TarI cytidylyltransferase family. IspD subfamily.

The catalysed reaction is 2-C-methyl-D-erythritol 4-phosphate + CTP + H(+) = 4-CDP-2-C-methyl-D-erythritol + diphosphate. The protein operates within isoprenoid biosynthesis; isopentenyl diphosphate biosynthesis via DXP pathway; isopentenyl diphosphate from 1-deoxy-D-xylulose 5-phosphate: step 2/6. Functionally, catalyzes the formation of 4-diphosphocytidyl-2-C-methyl-D-erythritol from CTP and 2-C-methyl-D-erythritol 4-phosphate (MEP). This is 2-C-methyl-D-erythritol 4-phosphate cytidylyltransferase from Alkaliphilus metalliredigens (strain QYMF).